Here is a 1361-residue protein sequence, read N- to C-terminus: DNA-directed RNA polymerase subunit beta' (1361 aa).

4 residues coordinate Zn(2+): cysteine 69, cysteine 71, cysteine 84, and cysteine 87. Mg(2+) contacts are provided by aspartate 460, aspartate 462, and aspartate 464. Zn(2+)-binding residues include cysteine 808, cysteine 882, cysteine 889, and cysteine 892.

It belongs to the RNA polymerase beta' chain family. As to quaternary structure, the RNAP catalytic core consists of 2 alpha, 1 beta, 1 beta' and 1 omega subunit. When a sigma factor is associated with the core the holoenzyme is formed, which can initiate transcription. Requires Mg(2+) as cofactor. It depends on Zn(2+) as a cofactor.

The catalysed reaction is RNA(n) + a ribonucleoside 5'-triphosphate = RNA(n+1) + diphosphate. In terms of biological role, DNA-dependent RNA polymerase catalyzes the transcription of DNA into RNA using the four ribonucleoside triphosphates as substrates. This chain is DNA-directed RNA polymerase subunit beta', found in Rickettsia bellii (strain RML369-C).